The chain runs to 602 residues: UvrABC system protein C (602 aa).

A GIY-YIG domain is found at 15 to 92 (DLPGSYQMKD…IQKYQPYYNI (78 aa)). Residues 197 to 232 (GKAKASLTAKMERAAKNLQFERAAEIRDQLHYIEQT) enclose the UVR domain.

It belongs to the UvrC family. In terms of assembly, interacts with UvrB in an incision complex.

The protein resides in the cytoplasm. Its function is as follows. The UvrABC repair system catalyzes the recognition and processing of DNA lesions. UvrC both incises the 5' and 3' sides of the lesion. The N-terminal half is responsible for the 3' incision and the C-terminal half is responsible for the 5' incision. The chain is UvrABC system protein C from Lacticaseibacillus casei (strain BL23) (Lactobacillus casei).